The primary structure comprises 327 residues: Aspartate carbamoyltransferase catalytic subunit (327 aa).

Carbamoyl phosphate is bound by residues R73 and T74. K101 is a binding site for L-aspartate. R123, H153, and Q156 together coordinate carbamoyl phosphate. Positions 186 and 241 each coordinate L-aspartate. G282 and P283 together coordinate carbamoyl phosphate.

Belongs to the aspartate/ornithine carbamoyltransferase superfamily. ATCase family. As to quaternary structure, heterododecamer (2C3:3R2) of six catalytic PyrB chains organized as two trimers (C3), and six regulatory PyrI chains organized as three dimers (R2).

It catalyses the reaction carbamoyl phosphate + L-aspartate = N-carbamoyl-L-aspartate + phosphate + H(+). Its pathway is pyrimidine metabolism; UMP biosynthesis via de novo pathway; (S)-dihydroorotate from bicarbonate: step 2/3. Functionally, catalyzes the condensation of carbamoyl phosphate and aspartate to form carbamoyl aspartate and inorganic phosphate, the committed step in the de novo pyrimidine nucleotide biosynthesis pathway. This is Aspartate carbamoyltransferase catalytic subunit from Acidithiobacillus ferrooxidans (strain ATCC 23270 / DSM 14882 / CIP 104768 / NCIMB 8455) (Ferrobacillus ferrooxidans (strain ATCC 23270)).